A 75-amino-acid polypeptide reads, in one-letter code: MASWRMLCFVLLFTSILICHDARPLPSSLSSSNGSPAFVESVKQVVKEIMRRKQLLGTQYSTNRLSPSGPDPHHH.

Residues 1–22 (MASWRMLCFVLLFTSILICHDA) form the signal peptide. Hydroxyproline is present on residues Pro67 and Pro70. An O-linked (Ara...) hydroxyproline glycan is attached at Pro70.

This sequence belongs to the CLV3/ESR signal peptide family. The O-glycosylation (arabinosylation) of the hydroxyproline Pro-70 enhances binding affinity of the CLE33p peptide for its receptor. Expressed in root vasculature.

Its subcellular location is the secreted. It is found in the extracellular space. Functionally, signaling peptide involved in the regulation of root colonization by arbuscular mycorrhizal (AM) fungi. Moves from root to shoot to function with the receptor kinase SUNN, in a signaling pathway that repress strigolactone biosynthetic genes and strigolactone content in the roots, and consequently reduces the promotion of further colonization by AM fungi. In Medicago truncatula (Barrel medic), this protein is CLAVATA3/ESR (CLE)-related protein 33.